Here is a 926-residue protein sequence, read N- to C-terminus: Nitrate reductase [NADH] (926 aa).

Residues 1–85 (MAASVDRQYH…SDSEEDDDEN (85 aa)) are disordered. Positions 36 to 46 (YTFSNPPSSNG) are enriched in polar residues. Residues 58–73 (DNNSNSNNGSNNNNNR) are compositionally biased toward low complexity. Mo-molybdopterin is bound at residue C204. Residues 551–626 (SKMYSMSEVK…LEDFRIGELI (76 aa)) form the Cytochrome b5 heme-binding domain. The heme site is built by H586 and H609. The 113-residue stretch at 670-782 (RVKIPCKLIE…KGPLGHIEYL (113 aa)) folds into the FAD-binding FR-type domain. FAD contacts are provided by residues 722 to 725 (RAYT), 739 to 743 (VVKVY), F744, F751, 756 to 758 (VMS), and T809.

It belongs to the nitrate reductase family. As to quaternary structure, homodimer. It depends on FAD as a cofactor. Requires heme as cofactor. Mo-molybdopterin serves as cofactor.

It catalyses the reaction nitrite + NAD(+) + H2O = nitrate + NADH + H(+). Its function is as follows. Nitrate reductase is a key enzyme involved in the first step of nitrate assimilation in plants, fungi and bacteria. The sequence is that of Nitrate reductase [NADH] (NIA) from Spinacia oleracea (Spinach).